The primary structure comprises 358 residues: Ubiquitin thioesterase OTU1 (358 aa).

The 83-residue stretch at 5–87 folds into the Ubiquitin-like domain; that stretch reads FSVKLKSKKG…LIVEEKAGAA (83 aa). Residues 8-94 form a UBX-like region; that stretch reads KLKSKKGQFI…GAAGPTSTPL (87 aa). Residues 83-108 are disordered; that stretch reads KAGAAGPTSTPLASGSGSSTMEDDEA. A compositionally biased stretch (polar residues) spans 89 to 102; the sequence is PTSTPLASGSGSST. One can recognise an OTU domain in the interval 161 to 285; it reads LLKKVVPADN…GIHYDPLYME (125 aa). The cys-loop stretch occupies residues 166-172; that stretch reads VPADNSC. Residue Asp-169 is part of the active site. Catalysis depends on Cys-172, which acts as the Nucleophile. The segment at 224 to 234 is variable-loop; the sequence is IQKADSWGGAI. A his-loop region spans residues 274 to 278; that stretch reads FDGIH. Residue Ile-277 participates in substrate binding. The active site involves His-278. Residues 301 to 306 form an S2 site region; that stretch reads MGVYQQ. The segment at 328-352 adopts a C2H2-type zinc-finger fold; sequence LRCMDCDVMLVGQGQAQEHAKKTGH. His-352 is an active-site residue.

It carries out the reaction Thiol-dependent hydrolysis of ester, thioester, amide, peptide and isopeptide bonds formed by the C-terminal Gly of ubiquitin (a 76-residue protein attached to proteins as an intracellular targeting signal).. In terms of biological role, hydrolase that can remove conjugated ubiquitin from proteins and may therefore play an important regulatory role at the level of protein turnover by preventing degradation. The sequence is that of Ubiquitin thioesterase OTU1 from Drosophila pseudoobscura pseudoobscura (Fruit fly).